The following is a 557-amino-acid chain: 2-isopropylmalate synthase (557 aa).

The Pyruvate carboxyltransferase domain occupies 33 to 307 (PIWCSSDLRD…DPQLDFSDID (275 aa)). Asp-42, His-246, His-248, and Asn-282 together coordinate Mg(2+). The regulatory domain stretch occupies residues 439–557 (ANSPYALVSH…SLSQQEAKAA (119 aa)).

The protein belongs to the alpha-IPM synthase/homocitrate synthase family. LeuA type 2 subfamily. As to quaternary structure, homodimer. Requires Mg(2+) as cofactor.

Its subcellular location is the cytoplasm. The enzyme catalyses 3-methyl-2-oxobutanoate + acetyl-CoA + H2O = (2S)-2-isopropylmalate + CoA + H(+). It functions in the pathway amino-acid biosynthesis; L-leucine biosynthesis; L-leucine from 3-methyl-2-oxobutanoate: step 1/4. Its function is as follows. Catalyzes the condensation of the acetyl group of acetyl-CoA with 3-methyl-2-oxobutanoate (2-ketoisovalerate) to form 3-carboxy-3-hydroxy-4-methylpentanoate (2-isopropylmalate). The chain is 2-isopropylmalate synthase from Pseudomonas putida (strain W619).